We begin with the raw amino-acid sequence, 1479 residues long: Rhoptry neck protein 2 (1479 aa).

The N-terminal stretch at 1–24 (MTKRAGLPLGRAFLVLILLSAADS) is a signal peptide. The Cytoplasmic portion of the chain corresponds to 25–1277 (LFFSSFPRSA…EQRRKSRKQA (1253 aa)). Disordered stretches follow at residues 49–68 (PDSDATPGLRPQPSPRTFRP) and 291–316 (VYATPPAPRPVPVQSNQTEKERSPTS). The chain crosses the membrane as a helical span at residues 1278–1298 (IIGVLTLGMMGLYALLNVADI). Residues 1297 to 1333 (DIVQHMEDIGGAPPVSCVTNEILGVTCAPQAIAKATT) form an interaction with AMA1 region. Over 1299-1479 (VQHMEDIGGA…FPMSAPLIKA (181 aa)) the chain is Extracellular. C1313 and C1323 are joined by a disulfide. Positions 1419–1445 (TYRKTEQETKQPPRPRNLHNPSSWGDT) are disordered.

The protein belongs to the apicomplexan parasites RON2 family. Component of the moving junction (MJ) complex, composed of AMA1, a transmembrane protein on the parasite surface, and a complex of the rhoptry neck proteins RON2, RON4, RON5 and RON8 localized to the cytoplasmic face of the host plasma membrane. Interacts (via C-terminus) with AMA1 (via ectodomain); RON2 serves as the receptor for AMA1 on the host plasma membrane. AMA1 and the RON proteins are initially in distinct compartments within the parasite, namely the micronemes and the rhoptries, and interaction happens only upon initiation of invasion when the micronemes and rhoptries discharge.

The protein resides in the secreted. Its subcellular location is the cytoplasm. It is found in the host cell membrane. Essential rhoptry neck protein that plays an important role in host cell invasion. Upon host invasion by tachyzoites, the protein is injected into the host cell where it functions as a receptor for apical membrane antigen 1 (AMA1) on the parasite. Part of the moving junction (MJ) complex, a ringlike structure formed between the plasma membranes of the apical tip of the parasite and the target host cell. During invasion, the MJ migrates from the anterior to the posterior of the parasite, leading to internalization of the parasite into a parasitophorous vacuole (PV). This chain is Rhoptry neck protein 2 (RON2), found in Toxoplasma gondii (strain ATCC 50611 / Me49).